The sequence spans 118 residues: UPF0102 protein Dtur_1530 (118 aa).

Belongs to the UPF0102 family.

The sequence is that of UPF0102 protein Dtur_1530 from Dictyoglomus turgidum (strain DSM 6724 / Z-1310).